The sequence spans 122 residues: Large ribosomal subunit protein uL14 (122 aa).

Belongs to the universal ribosomal protein uL14 family. Part of the 50S ribosomal subunit. Forms a cluster with proteins L3 and L19. In the 70S ribosome, L14 and L19 interact and together make contacts with the 16S rRNA in bridges B5 and B8.

In terms of biological role, binds to 23S rRNA. Forms part of two intersubunit bridges in the 70S ribosome. The sequence is that of Large ribosomal subunit protein uL14 from Petrotoga mobilis (strain DSM 10674 / SJ95).